The sequence spans 236 residues: TVP38/TMEM64 family membrane protein YdjX (236 aa).

5 helical membrane-spanning segments follow: residues 7 to 27 (FLFA…FGLF), 50 to 70 (LYIL…ILVI), 72 to 92 (GGIV…ATLA), 156 to 176 (IAFW…IVIY), and 192 to 212 (FILQ…LAKL). Residues 73 to 183 (GIVFGPLLGT…VIYTVMASDL (111 aa)) are VTT domain.

Belongs to the TVP38/TMEM64 family.

Its subcellular location is the cell membrane. This chain is TVP38/TMEM64 family membrane protein YdjX (ydjX), found in Escherichia coli (strain K12).